Here is a 313-residue protein sequence, read N- to C-terminus: Aspartate carbamoyltransferase catalytic subunit (313 aa).

Carbamoyl phosphate is bound by residues R58 and T59. An L-aspartate-binding site is contributed by K86. R108, H136, and Q139 together coordinate carbamoyl phosphate. 2 residues coordinate L-aspartate: R169 and R223. G264 and P265 together coordinate carbamoyl phosphate.

It belongs to the aspartate/ornithine carbamoyltransferase superfamily. ATCase family. As to quaternary structure, heterododecamer (2C3:3R2) of six catalytic PyrB chains organized as two trimers (C3), and six regulatory PyrI chains organized as three dimers (R2).

The catalysed reaction is carbamoyl phosphate + L-aspartate = N-carbamoyl-L-aspartate + phosphate + H(+). Its pathway is pyrimidine metabolism; UMP biosynthesis via de novo pathway; (S)-dihydroorotate from bicarbonate: step 2/3. Functionally, catalyzes the condensation of carbamoyl phosphate and aspartate to form carbamoyl aspartate and inorganic phosphate, the committed step in the de novo pyrimidine nucleotide biosynthesis pathway. This Chlorobium luteolum (strain DSM 273 / BCRC 81028 / 2530) (Pelodictyon luteolum) protein is Aspartate carbamoyltransferase catalytic subunit.